The sequence spans 163 residues: Nucleotide-binding protein CYA_0935 (163 aa).

This sequence belongs to the YajQ family.

In terms of biological role, nucleotide-binding protein. The protein is Nucleotide-binding protein CYA_0935 of Synechococcus sp. (strain JA-3-3Ab) (Cyanobacteria bacterium Yellowstone A-Prime).